Here is a 211-residue protein sequence, read N- to C-terminus: Protein-L-isoaspartate O-methyltransferase (211 aa).

Residue S62 is part of the active site.

Belongs to the methyltransferase superfamily. L-isoaspartyl/D-aspartyl protein methyltransferase family.

It localises to the cytoplasm. It carries out the reaction [protein]-L-isoaspartate + S-adenosyl-L-methionine = [protein]-L-isoaspartate alpha-methyl ester + S-adenosyl-L-homocysteine. Its function is as follows. Catalyzes the methyl esterification of L-isoaspartyl residues in peptides and proteins that result from spontaneous decomposition of normal L-aspartyl and L-asparaginyl residues. It plays a role in the repair and/or degradation of damaged proteins. The chain is Protein-L-isoaspartate O-methyltransferase from Shewanella sp. (strain ANA-3).